The chain runs to 29 residues: ShK homolog Ask132958 (29 aa).

The region spanning C1–C29 is the ShKT domain. 3 cysteine pairs are disulfide-bonded: C1–C29, C8–C22, and C13–C26.

The protein belongs to the sea anemone type 1 potassium channel toxin family. Type 1a subfamily.

It is found in the secreted. Its subcellular location is the nematocyst. In terms of biological role, this peptide is similar to the potassium channel toxin ShK, but does not show activity on potassium channels. It appears that Lys-19, which is expected to occupy the pore of the channel, is not sufficiently accessible for binding, and therefore that this peptide must have a distinct functional role that does not involve potassium channels. It is noteworthy that this peptide is much more stable in the presence of trypsin, chymotrypsin and pepsin than the toxin ShK. The sequence is that of ShK homolog Ask132958 from Anemonia sulcata (Mediterranean snakelocks sea anemone).